We begin with the raw amino-acid sequence, 138 residues long: ATP synthase epsilon chain (138 aa).

It belongs to the ATPase epsilon chain family. As to quaternary structure, F-type ATPases have 2 components, CF(1) - the catalytic core - and CF(0) - the membrane proton channel. CF(1) has five subunits: alpha(3), beta(3), gamma(1), delta(1), epsilon(1). CF(0) has three main subunits: a, b and c.

The protein localises to the cell membrane. Its function is as follows. Produces ATP from ADP in the presence of a proton gradient across the membrane. In Streptococcus equinus (Streptococcus bovis), this protein is ATP synthase epsilon chain.